Consider the following 145-residue polypeptide: Deoxyuridine 5'-triphosphate nucleotidohydrolase (145 aa).

Substrate contacts are provided by residues 62-64, N75, and 79-81; these read RSG and TVD.

Belongs to the dUTPase family. Mg(2+) is required as a cofactor.

It carries out the reaction dUTP + H2O = dUMP + diphosphate + H(+). Its pathway is pyrimidine metabolism; dUMP biosynthesis; dUMP from dCTP (dUTP route): step 2/2. In terms of biological role, this enzyme is involved in nucleotide metabolism: it produces dUMP, the immediate precursor of thymidine nucleotides and it decreases the intracellular concentration of dUTP so that uracil cannot be incorporated into DNA. This is Deoxyuridine 5'-triphosphate nucleotidohydrolase from Gloeothece citriformis (strain PCC 7424) (Cyanothece sp. (strain PCC 7424)).